A 290-amino-acid chain; its full sequence is 3-deoxy-manno-octulosonate cytidylyltransferase, mitochondrial (290 aa).

A mitochondrion-targeting transit peptide spans 1–50; the sequence is MSVCSSSSSSQKTWIVNGILAGTAIAAAIGARAYLGRSKKFRSRVVGIIP.

The protein belongs to the KdsB family. Requires Mg(2+) as cofactor. As to expression, expressed in roots, leaves, stems and siliques.

It is found in the mitochondrion outer membrane. The enzyme catalyses 3-deoxy-alpha-D-manno-oct-2-ulosonate + CTP = CMP-3-deoxy-beta-D-manno-octulosonate + diphosphate. The protein operates within nucleotide-sugar biosynthesis; CMP-3-deoxy-D-manno-octulosonate biosynthesis; CMP-3-deoxy-D-manno-octulosonate from 3-deoxy-D-manno-octulosonate and CTP: step 1/1. Inhibited by 2beta-deoxy-Kdo. Its function is as follows. Catalyzes the production of the sugar nucleotide CMP-3-deoxy-D-manno-octulosonate (CMP-KDO). CTP is the preferred nucleotide donor, but it can partially be replaced with UTP. Activates KDO during the biosynthesis of rhamnogalacturonan II (RG-II), a structurally complex pectic polysaccharide of the primary cell wall. RG-II is essential for the cell wall integrity of rapidly growing tissues and pollen tube growth and elongation. This chain is 3-deoxy-manno-octulosonate cytidylyltransferase, mitochondrial, found in Arabidopsis thaliana (Mouse-ear cress).